Reading from the N-terminus, the 412-residue chain is Serine--tRNA ligase (412 aa).

228–230 (TAE) contributes to the L-serine binding site. 259 to 261 (RKE) lines the ATP pocket. L-serine is bound at residue Glu-282. 346–349 (EISS) provides a ligand contact to ATP. Residue Ser-380 coordinates L-serine.

This sequence belongs to the class-II aminoacyl-tRNA synthetase family. Type-1 seryl-tRNA synthetase subfamily. In terms of assembly, homodimer. The tRNA molecule binds across the dimer.

It localises to the cytoplasm. The catalysed reaction is tRNA(Ser) + L-serine + ATP = L-seryl-tRNA(Ser) + AMP + diphosphate + H(+). It catalyses the reaction tRNA(Sec) + L-serine + ATP = L-seryl-tRNA(Sec) + AMP + diphosphate + H(+). The protein operates within aminoacyl-tRNA biosynthesis; selenocysteinyl-tRNA(Sec) biosynthesis; L-seryl-tRNA(Sec) from L-serine and tRNA(Sec): step 1/1. Functionally, catalyzes the attachment of serine to tRNA(Ser). Is also able to aminoacylate tRNA(Sec) with serine, to form the misacylated tRNA L-seryl-tRNA(Sec), which will be further converted into selenocysteinyl-tRNA(Sec). The chain is Serine--tRNA ligase from Aliarcobacter butzleri (strain RM4018) (Arcobacter butzleri).